The primary structure comprises 616 residues: Fatty acyl-CoA reductase 2, chloroplastic (616 aa).

A chloroplast-targeting transit peptide spans Met-1–Val-14. An NAD(P)H-binding motif is present at residues Phe-133–Ala-143. Active-site residues include Tyr-357 and Lys-361.

The protein belongs to the fatty acyl-CoA reductase family. As to expression, expressed in the tapetum of anthers.

It localises to the plastid. The protein resides in the chloroplast. It catalyses the reaction a long-chain fatty acyl-CoA + 2 NADPH + 2 H(+) = a long-chain primary fatty alcohol + 2 NADP(+) + CoA. The enzyme catalyses hexadecanoyl-CoA + 2 NADPH + 2 H(+) = hexadecan-1-ol + 2 NADP(+) + CoA. The catalysed reaction is hexadecanoyl-[ACP] + 2 NADPH + 2 H(+) = hexadecan-1-ol + holo-[ACP] + 2 NADP(+). Catalyzes the reduction of fatty acyl-CoA and -ACP (acyl carrier protein) substrates to fatty alcohols. Triggers the accumulation of C16 and C18 fatty alcohols; converts palmitoyl-acyl carrier protein to the corresponding C16:0 alcohol with NAD(P)H as electron donor, but seems inactive toward palmitoyl- or other acyl-coenzyme A. Also triggers the formation of some C16:0 aldehydes. Involved in the synthesis of the lipid component in sporopollenin. Required for exine patterning of pollen grain by mediating the formation of pollen wall substances. The sequence is that of Fatty acyl-CoA reductase 2, chloroplastic from Arabidopsis thaliana (Mouse-ear cress).